We begin with the raw amino-acid sequence, 313 residues long: D-apiose import binding protein (313 aa).

The signal sequence occupies residues 1–26; the sequence is MKLTRRLTLAAFASALALGTAMPAFA. D-apiofuranose is bound by residues asparagine 39, 115-116, 162-164, arginine 168, asparagine 218, aspartate 243, and glutamine 263; these read DR and DTN.

This sequence belongs to the bacterial solute-binding protein 2 family.

It is found in the periplasm. In terms of biological role, part of an ABC transporter complex involved in D-apiose import. Binds D-apiose, D-ribose and D-ribulose. This Rhizobium etli (strain ATCC 51251 / DSM 11541 / JCM 21823 / NBRC 15573 / CFN 42) protein is D-apiose import binding protein.